A 315-amino-acid chain; its full sequence is Methionyl-tRNA formyltransferase (315 aa).

112–115 contributes to the (6S)-5,6,7,8-tetrahydrofolate binding site; that stretch reads SLLP.

Belongs to the Fmt family.

It carries out the reaction L-methionyl-tRNA(fMet) + (6R)-10-formyltetrahydrofolate = N-formyl-L-methionyl-tRNA(fMet) + (6S)-5,6,7,8-tetrahydrofolate + H(+). Its function is as follows. Attaches a formyl group to the free amino group of methionyl-tRNA(fMet). The formyl group appears to play a dual role in the initiator identity of N-formylmethionyl-tRNA by promoting its recognition by IF2 and preventing the misappropriation of this tRNA by the elongation apparatus. The protein is Methionyl-tRNA formyltransferase of Leptospira borgpetersenii serovar Hardjo-bovis (strain JB197).